Reading from the N-terminus, the 735-residue chain is Translation factor GUF1 homolog, chloroplastic (735 aa).

Disordered regions lie at residues 1-38 (MAVP…PSTS) and 106-126 (PENA…GVDN). Residues 1–47 (MAVPTIPSPACISQSANGSIISTRRSTETNPRQHPSTSYRCAGRVVR) constitute a chloroplast transit peptide. The segment covering 11–38 (CISQSANGSIISTRRSTETNPRQHPSTS) has biased composition (polar residues). Residues 106–115 (PENAEKDYSK) show a composition bias toward basic and acidic residues. In terms of domain architecture, tr-type G spans 137-319 (SNIRNFSIIA…AVVKKIPPPK (183 aa)). Residues 146 to 153 (AHIDHGKS), 212 to 216 (DTPGH), and 266 to 269 (NKID) contribute to the GTP site.

This sequence belongs to the TRAFAC class translation factor GTPase superfamily. Classic translation factor GTPase family. LepA subfamily.

It is found in the plastid. The protein resides in the chloroplast. The enzyme catalyses GTP + H2O = GDP + phosphate + H(+). In terms of biological role, promotes chloroplast protein synthesis. May act as a fidelity factor of the translation reaction, by catalyzing a one-codon backward translocation of tRNAs on improperly translocated ribosomes. The sequence is that of Translation factor GUF1 homolog, chloroplastic from Physcomitrium patens (Spreading-leaved earth moss).